A 152-amino-acid polypeptide reads, in one-letter code: MQYTRTVEALKQGTVIDHIPAGEGVKILRLFKLTETGERVTVGLNLVSRHMGSKDLIKVENVALTEEQANELALFAPKATVNVIDNFEVVKKHKLTLPDAVEGIFSCPNSNCISHNEPVKSVFYVKTLAHDTKMKCKYCEKVFSRDIVAEVR.

The Zn(2+) site is built by Cys107, Cys112, Cys136, and Cys139.

This sequence belongs to the PyrI family. Contains catalytic and regulatory chains. The cofactor is Zn(2+).

Involved in allosteric regulation of aspartate carbamoyltransferase. The chain is Aspartate carbamoyltransferase regulatory chain from Chromobacterium violaceum (strain ATCC 12472 / DSM 30191 / JCM 1249 / CCUG 213 / NBRC 12614 / NCIMB 9131 / NCTC 9757 / MK).